A 176-amino-acid polypeptide reads, in one-letter code: MILIIYAHPYPHHSHANKQMLEQAGTLENVEIRSLYHLYPDFNIDVAAEQEALSRASLIVWQHPMQWYSVPPLLKLWMDKALTHGWAYGHGGTALHGKYLLWAVTTGGGENHFTIGSHPGFDVLSQPLQATALYCGLKWLPPFSMHCTFICDDDTLQAQARQYKQRLLAWQEVNHG.

FMN is bound by residues His8, Ser14–Asn17, Met65–Tyr68, and Thr105–Gly108.

It belongs to the NAD(P)H dehydrogenase (quinone) family. KefF subfamily. Homodimer. Interacts with KefC. The cofactor is FMN.

The protein resides in the cell inner membrane. It carries out the reaction a quinone + NADH + H(+) = a quinol + NAD(+). The enzyme catalyses a quinone + NADPH + H(+) = a quinol + NADP(+). In terms of biological role, regulatory subunit of a potassium efflux system that confers protection against electrophiles. Required for full activity of KefC. Shows redox enzymatic activity, but this enzymatic activity is not required for activation of KefC. The protein is Glutathione-regulated potassium-efflux system ancillary protein KefF of Salmonella gallinarum (strain 287/91 / NCTC 13346).